The chain runs to 487 residues: Protein nucleotidyltransferase YdiU (487 aa).

The ATP site is built by Gly90, Gly92, Arg93, Lys113, Asp125, Gly126, Arg176, and Arg183. Residue Asp252 is the Proton acceptor of the active site. Residues Asn253 and Asp262 each contribute to the Mg(2+) site. An ATP-binding site is contributed by Asp262.

This sequence belongs to the SELO family. It depends on Mg(2+) as a cofactor. Mn(2+) serves as cofactor.

It catalyses the reaction L-seryl-[protein] + ATP = 3-O-(5'-adenylyl)-L-seryl-[protein] + diphosphate. It carries out the reaction L-threonyl-[protein] + ATP = 3-O-(5'-adenylyl)-L-threonyl-[protein] + diphosphate. The enzyme catalyses L-tyrosyl-[protein] + ATP = O-(5'-adenylyl)-L-tyrosyl-[protein] + diphosphate. The catalysed reaction is L-histidyl-[protein] + UTP = N(tele)-(5'-uridylyl)-L-histidyl-[protein] + diphosphate. It catalyses the reaction L-seryl-[protein] + UTP = O-(5'-uridylyl)-L-seryl-[protein] + diphosphate. It carries out the reaction L-tyrosyl-[protein] + UTP = O-(5'-uridylyl)-L-tyrosyl-[protein] + diphosphate. In terms of biological role, nucleotidyltransferase involved in the post-translational modification of proteins. It can catalyze the addition of adenosine monophosphate (AMP) or uridine monophosphate (UMP) to a protein, resulting in modifications known as AMPylation and UMPylation. This is Protein nucleotidyltransferase YdiU from Pseudomonas syringae pv. tomato (strain ATCC BAA-871 / DC3000).